The sequence spans 181 residues: Isopentenyl-diphosphate Delta-isomerase (181 aa).

His29 and His36 together coordinate Mn(2+). One can recognise a Nudix hydrolase domain in the interval 34-167 (PLHLAFSCYL…GWAISPWAAE (134 aa)). Residue Cys71 is part of the active site. His73 contributes to the Mn(2+) binding site. Glu91 contributes to the Mg(2+) binding site. Residues Glu118 and Glu120 each coordinate Mn(2+). Residue Glu120 is part of the active site.

The protein belongs to the IPP isomerase type 1 family. The cofactor is Mg(2+). Mn(2+) serves as cofactor.

The protein localises to the cytoplasm. It catalyses the reaction isopentenyl diphosphate = dimethylallyl diphosphate. It functions in the pathway isoprenoid biosynthesis; dimethylallyl diphosphate biosynthesis; dimethylallyl diphosphate from isopentenyl diphosphate: step 1/1. Functionally, catalyzes the 1,3-allylic rearrangement of the homoallylic substrate isopentenyl (IPP) to its highly electrophilic allylic isomer, dimethylallyl diphosphate (DMAPP). This chain is Isopentenyl-diphosphate Delta-isomerase, found in Mycolicibacterium vanbaalenii (strain DSM 7251 / JCM 13017 / BCRC 16820 / KCTC 9966 / NRRL B-24157 / PYR-1) (Mycobacterium vanbaalenii).